The primary structure comprises 72 residues: Toxin Acra II-2 (72 aa).

In terms of domain architecture, LCN-type CS-alpha/beta spans 3–67 (VPGNYPLNTN…VWNAAKNYCK (65 aa)). Disulfide bonds link C18/C41, C27/C46, and C31/C48.

Belongs to the long (3 C-C) scorpion toxin superfamily. Sodium channel inhibitor family. Beta subfamily. In terms of tissue distribution, expressed by the venom gland.

The protein resides in the secreted. Its function is as follows. Binds to sodium channels (Nav) and affects the channel activation process. The sequence is that of Toxin Acra II-2 from Androctonus crassicauda (Arabian fat-tailed scorpion).